The sequence spans 74 residues: Small ribosomal subunit protein bS18 (74 aa).

This sequence belongs to the bacterial ribosomal protein bS18 family. Part of the 30S ribosomal subunit. Forms a tight heterodimer with protein bS6.

Binds as a heterodimer with protein bS6 to the central domain of the 16S rRNA, where it helps stabilize the platform of the 30S subunit. The protein is Small ribosomal subunit protein bS18 of Natranaerobius thermophilus (strain ATCC BAA-1301 / DSM 18059 / JW/NM-WN-LF).